Reading from the N-terminus, the 318-residue chain is Malate dehydrogenase (318 aa).

NAD(+)-binding positions include 10–15 (GAGNIG) and aspartate 34. Substrate is bound by residues arginine 83 and arginine 89. NAD(+) is bound by residues asparagine 96 and 119–121 (ITN). Substrate-binding residues include asparagine 121 and arginine 152. The active-site Proton acceptor is the histidine 176.

It belongs to the LDH/MDH superfamily. MDH type 3 family.

The enzyme catalyses (S)-malate + NAD(+) = oxaloacetate + NADH + H(+). Functionally, catalyzes the reversible oxidation of malate to oxaloacetate. The sequence is that of Malate dehydrogenase from Rhodospirillum rubrum (strain ATCC 11170 / ATH 1.1.1 / DSM 467 / LMG 4362 / NCIMB 8255 / S1).